A 1084-amino-acid polypeptide reads, in one-letter code: Carbamoyl phosphate synthase large chain (1084 aa).

The interval Met-1–Glu-401 is carboxyphosphate synthetic domain. The ATP site is built by Arg-129, Arg-169, Gly-175, Gly-176, Arg-208, Leu-210, Glu-215, Gly-241, Val-242, His-243, Gln-284, and Glu-298. An ATP-grasp 1 domain is found at Arg-133 to Val-327. Mg(2+) contacts are provided by Gln-284, Glu-298, and Asn-300. The Mn(2+) site is built by Gln-284, Glu-298, and Asn-300. Residues Thr-402–Ala-546 are oligomerization domain. The tract at residues Val-547–Gly-947 is carbamoyl phosphate synthetic domain. One can recognise an ATP-grasp 2 domain in the interval Asp-672–Ala-862. 9 residues coordinate ATP: Arg-708, Arg-747, Glu-753, Gly-778, Val-779, His-780, Ser-781, Gln-821, and Glu-833. Mg(2+) contacts are provided by Gln-821, Glu-833, and Asn-835. Mn(2+)-binding residues include Gln-821, Glu-833, and Asn-835. The 137-residue stretch at Val-948–Val-1084 folds into the MGS-like domain. An allosteric domain region spans residues Val-948–Val-1084.

This sequence belongs to the CarB family. As to quaternary structure, composed of two chains; the small (or glutamine) chain promotes the hydrolysis of glutamine to ammonia, which is used by the large (or ammonia) chain to synthesize carbamoyl phosphate. Tetramer of heterodimers (alpha,beta)4. Requires Mg(2+) as cofactor. Mn(2+) serves as cofactor.

It carries out the reaction hydrogencarbonate + L-glutamine + 2 ATP + H2O = carbamoyl phosphate + L-glutamate + 2 ADP + phosphate + 2 H(+). The catalysed reaction is hydrogencarbonate + NH4(+) + 2 ATP = carbamoyl phosphate + 2 ADP + phosphate + 2 H(+). It functions in the pathway amino-acid biosynthesis; L-arginine biosynthesis; carbamoyl phosphate from bicarbonate: step 1/1. Its pathway is pyrimidine metabolism; UMP biosynthesis via de novo pathway; (S)-dihydroorotate from bicarbonate: step 1/3. In terms of biological role, large subunit of the glutamine-dependent carbamoyl phosphate synthetase (CPSase). CPSase catalyzes the formation of carbamoyl phosphate from the ammonia moiety of glutamine, carbonate, and phosphate donated by ATP, constituting the first step of 2 biosynthetic pathways, one leading to arginine and/or urea and the other to pyrimidine nucleotides. The large subunit (synthetase) binds the substrates ammonia (free or transferred from glutamine from the small subunit), hydrogencarbonate and ATP and carries out an ATP-coupled ligase reaction, activating hydrogencarbonate by forming carboxy phosphate which reacts with ammonia to form carbamoyl phosphate. This is Carbamoyl phosphate synthase large chain from Symbiobacterium thermophilum (strain DSM 24528 / JCM 14929 / IAM 14863 / T).